The following is a 186-amino-acid chain: Cell division protein SepF (186 aa).

2 disordered regions span residues 14-59 and 157-186; these read EHDE…NETS and GRSQESNETSSSVSSDNFPTWGYETSRLAQ. Residues 16–27 show a composition bias toward acidic residues; sequence DEYEEDYDEEME. Residues 159 to 171 show a composition bias toward low complexity; sequence SQESNETSSSVSS.

Belongs to the SepF family. In terms of assembly, homodimer. Interacts with FtsZ.

Its subcellular location is the cytoplasm. Its function is as follows. Cell division protein that is part of the divisome complex and is recruited early to the Z-ring. Probably stimulates Z-ring formation, perhaps through the cross-linking of FtsZ protofilaments. Its function overlaps with FtsA. The polypeptide is Cell division protein SepF (Synechocystis sp. (strain ATCC 27184 / PCC 6803 / Kazusa)).